We begin with the raw amino-acid sequence, 258 residues long: Phosphate import ATP-binding protein PstB (258 aa).

Residues 5–247 (IETKDLDIYY…ERIFSNPKEK (243 aa)) enclose the ABC transporter domain. 37 to 44 (GPSGCGKS) provides a ligand contact to ATP.

Belongs to the ABC transporter superfamily. Phosphate importer (TC 3.A.1.7) family. The complex is composed of two ATP-binding proteins (PstB), two transmembrane proteins (PstC and PstA) and a solute-binding protein (PstS).

The protein resides in the cell membrane. The catalysed reaction is phosphate(out) + ATP + H2O = ADP + 2 phosphate(in) + H(+). In terms of biological role, part of the ABC transporter complex PstSACB involved in phosphate import. Responsible for energy coupling to the transport system. The polypeptide is Phosphate import ATP-binding protein PstB (Cutibacterium acnes (strain DSM 16379 / KPA171202) (Propionibacterium acnes)).